The sequence spans 352 residues: B1 bradykinin receptor (352 aa).

The Extracellular segment spans residues 1-41 (MAAQTLLELQPSNQSQLSALNTTSCDNAREAWDLLYQVLPI). N13 and N21 each carry an N-linked (GlcNAc...) asparagine glycan. A helical transmembrane segment spans residues 42 to 62 (FILTICAFGLLGNLFVLSVFL). Residues 63–72 (LLRRRLTVAE) lie on the Cytoplasmic side of the membrane. Residues 73–93 (IYLVNLAASDLVFVLGLPFWA) traverse the membrane as a helical segment. Residues 94-110 (QNIWNQFNWPFGDLLCR) lie on the Extracellular side of the membrane. A disulfide bridge connects residues C109 and C188. A helical membrane pass occupies residues 111–131 (VVNGVIKANLFISIFLMVAIS). The Cytoplasmic portion of the chain corresponds to 132–153 (QDRYCVLVHPMASRRRRRRRRA). The chain crosses the membrane as a helical span at residues 154 to 174 (RATCMVIWAVGALLSTPTFLL). Residues 175-206 (RSVSAVQDLNISACILLLPHQAWHVARIVELN) lie on the Extracellular side of the membrane. N184 is a glycosylation site (N-linked (GlcNAc...) asparagine). The helical transmembrane segment at 207-227 (VLGFLLPLAAIIFFNGHILAS) threads the bilayer. At 228–250 (LRGQGEVSQTRIGGPKDCKTTVL) the chain is on the cytoplasmic side. Residues 251–271 (ILTLVAAFLVCWAPYHCFAFL) traverse the membrane as a helical segment. Residues 272–294 (EFLFQVRAVRGCFWEDFIDLGLQ) are Extracellular-facing. The chain crosses the membrane as a helical span at residues 295–315 (LANFFAFTNSCLNPVIYVFVG). At 316 to 326 (RLFRTKVWELY) the chain is on the cytoplasmic side. Residue C329 is the site of S-palmitoyl cysteine attachment.

It belongs to the G-protein coupled receptor 1 family. Bradykinin receptor subfamily. BDKRB1 sub-subfamily.

The protein localises to the cell membrane. In terms of biological role, this is a receptor for bradykinin. Could be a factor in chronic pain and inflammation. The protein is B1 bradykinin receptor (BDKRB1) of Tupaia minor (Pigmy tree shrew).